Here is a 573-residue protein sequence, read N- to C-terminus: DNA polymerase lambda (573 aa).

The BRCT domain occupies 35–131 (EARGWLSSLR…RLTDTEGFSL (97 aa)). Disordered stretches follow at residues 126 to 204 (TEGF…GPQV) and 214 to 233 (TGHY…APEA). Positions 263-277 (KAYSVQGDKWRALGY) are DNA-binding. The active-site Schiff-base intermediate with DNA is the Lys310. Positions 343–346 (GTKT) are DNA-binding. DCTP is bound by residues Arg384, 415–418 (SYRR), and 424–427 (GDVD). The involved in primer binding stretch occupies residues 418–427 (RGKMTCGDVD). 3 residues coordinate Mn(2+): Asp425, Asp427, and Asp488. Positions 464-503 (ENGQQQKYLGVCRLPGPGKRHRRLDIIVVPYCEFACALLY) are DNA-binding. Asn511 contacts dCTP.

The protein belongs to the DNA polymerase type-X family. Interacts with PCNA. Interacts with PAXX; promoting POLL recruitment to double-strand breaks (DSBs) and stimulation of the end-filling activity of POLL. Interacts with XRCC4; promoting POLL recruitment to double-strand breaks (DSBs) and stimulation of the end-filling activity of POLL. Interacts with NHEJ1/XLF; promoting POLL recruitment to double-strand breaks (DSBs) and stimulation of the end-filling activity of POLL. The cofactor is Mn(2+).

The protein resides in the nucleus. It catalyses the reaction DNA(n) + a 2'-deoxyribonucleoside 5'-triphosphate = DNA(n+1) + diphosphate. Its function is as follows. DNA polymerase that functions in several pathways of DNA repair. Involved in base excision repair (BER) responsible for repair of lesions that give rise to abasic (AP) sites in DNA. Also contributes to DNA double-strand break repair by non-homologous end joining and homologous recombination. Has both template-dependent and template-independent (terminal transferase) DNA polymerase activities. Also has a 5'-deoxyribose-5-phosphate lyase (dRP lyase) activity. This is DNA polymerase lambda from Mus musculus (Mouse).